The chain runs to 163 residues: MPLLDSFKVDHTKMPAPAVRLAKTMTTPKGDEIAVFDLRFCRPNQEILSEKGIHTLEHLFAGFMREHLNGEGIEIIDISPMGCRTGFYMSLIGVPKNARVLEAWRRSMEDILTLKSEEEIPELNIYQCGTACMHSLKEAQEIARTVLDRGISIMDNEALKLQL.

Fe cation contacts are provided by histidine 54, histidine 58, and cysteine 128.

Belongs to the LuxS family. In terms of assembly, homodimer. The cofactor is Fe cation.

It carries out the reaction S-(5-deoxy-D-ribos-5-yl)-L-homocysteine = (S)-4,5-dihydroxypentane-2,3-dione + L-homocysteine. In terms of biological role, involved in the synthesis of autoinducer 2 (AI-2) which is secreted by bacteria and is used to communicate both the cell density and the metabolic potential of the environment. The regulation of gene expression in response to changes in cell density is called quorum sensing. Catalyzes the transformation of S-ribosylhomocysteine (RHC) to homocysteine (HC) and 4,5-dihydroxy-2,3-pentadione (DPD). This Wolinella succinogenes (strain ATCC 29543 / DSM 1740 / CCUG 13145 / JCM 31913 / LMG 7466 / NCTC 11488 / FDC 602W) (Vibrio succinogenes) protein is S-ribosylhomocysteine lyase.